We begin with the raw amino-acid sequence, 244 residues long: Ubiquitin carboxyl-terminal hydrolase mug105 (244 aa).

The active-site Nucleophile is the Cys-42. His-165 acts as the Proton acceptor in catalysis. Asp-183 is an active-site residue.

The protein belongs to the peptidase C78 family. ZUFSP subfamily.

It is found in the cytoplasm. The catalysed reaction is Thiol-dependent hydrolysis of ester, thioester, amide, peptide and isopeptide bonds formed by the C-terminal Gly of ubiquitin (a 76-residue protein attached to proteins as an intracellular targeting signal).. Functionally, deubiquitinase with endodeubiquitinase activity that preferentially cleaves 'Lys-48'-linked polyubiquitin chains. Shows only weak activity against 'Lys-63' and 'Lys-11'-linked chains. Has a role in meiosis. The polypeptide is Ubiquitin carboxyl-terminal hydrolase mug105 (mug105) (Schizosaccharomyces pombe (strain 972 / ATCC 24843) (Fission yeast)).